The sequence spans 153 residues: uncharacterized protein (153 aa).

The signal sequence occupies residues 1–21 (MKITITSLLFFLVMIVELASA).

This is an uncharacterized protein from Saccharomyces cerevisiae (strain ATCC 204508 / S288c) (Baker's yeast).